A 171-amino-acid chain; its full sequence is ATP synthase subunit b (171 aa).

Residues 2–22 (FLVKMVLGFLILLSPLCATGL) traverse the membrane as a helical segment.

Belongs to the ATPase B chain family. As to quaternary structure, F-type ATPases have 2 components, F(1) - the catalytic core - and F(0) - the membrane proton channel. F(1) has five subunits: alpha(3), beta(3), gamma(1), delta(1), epsilon(1). F(0) has three main subunits: a(1), b(2) and c(10-14). The alpha and beta chains form an alternating ring which encloses part of the gamma chain. F(1) is attached to F(0) by a central stalk formed by the gamma and epsilon chains, while a peripheral stalk is formed by the delta and b chains.

It localises to the cell inner membrane. Functionally, f(1)F(0) ATP synthase produces ATP from ADP in the presence of a proton or sodium gradient. F-type ATPases consist of two structural domains, F(1) containing the extramembraneous catalytic core and F(0) containing the membrane proton channel, linked together by a central stalk and a peripheral stalk. During catalysis, ATP synthesis in the catalytic domain of F(1) is coupled via a rotary mechanism of the central stalk subunits to proton translocation. Component of the F(0) channel, it forms part of the peripheral stalk, linking F(1) to F(0). This is ATP synthase subunit b from Helicobacter pylori (strain HPAG1).